A 272-amino-acid chain; its full sequence is Prohibitin 1 (272 aa).

Residues 177–211 (KEFTEAVEMKQVAQQEAERARFIVEKAEQQKKAAV) adopt a coiled-coil conformation.

As to quaternary structure, the mitochondrial prohibitin complex consists of two subunits (PHB1 and PHB2), assembled into a membrane-associated ring-shaped supercomplex of approximately 1 mDa.

It is found in the mitochondrion inner membrane. Its subcellular location is the nucleus. The protein localises to the cytoplasm. It localises to the cell membrane. In terms of biological role, protein with pleiotropic attributes mediated in a cell-compartment- and tissue-specific manner, which include the plasma membrane-associated cell signaling functions, mitochondrial chaperone, and transcriptional co-regulator of transcription factors in the nucleus. Its function is as follows. In the mitochondria, together with PHB2, forms large ring complexes (prohibitin complexes) in the inner mitochondrial membrane (IMM) and functions as a chaperone protein that stabilizes mitochondrial respiratory enzymes and maintains mitochondrial integrity in the IMM, which is required for mitochondrial morphogenesis, neuronal survival, and normal lifespan. Functionally, in the nucleus, acts as a transcription coregulator, enhances promoter binding by TP53, a transcription factor it activates, but reduces the promoter binding by E2F1, a transcription factor it represses. In the plasma membrane, cooperates with CD86 to mediate CD86-signaling in B lymphocytes that regulates the level of IgG1 produced through the activation of distal signaling intermediates. Upon CD40 engagement, required to activate NF-kappa-B signaling pathway via phospholipase C and protein kinase C activation. This is Prohibitin 1 (PHB1) from Gallus gallus (Chicken).